A 423-amino-acid polypeptide reads, in one-letter code: DEHGVDPTGTYHGDSDLQLERINVYYNEATGGRYVPRAILMDLEPGTMDSVRAGPFGQLFRPDNFVFGQTGAGNNWAKGHYTEGAELIDSVLDVVRKEAESCDCLQGFQITHSLGGGTGSGMGTLLISKIREEYPDRVMLTFSVCPSPKVSDTVVEPYNATLSVHQLVENADEVMVLDNEALYDICFRTLKLTTPTYGDLNHLVCACMSGVTSCLRFPGQLNSDLRKLAVNLIPFPRLHFFMIGFAPLTSRGSQQYRALTVPELTQQQFDAKNMMCAADPRHGRYLTASCMFRGRMSTKEVDEQMLNVQNKNSSYFVEWIPNNIKSSVCDIPPKGLKMSACFIGNSTAIQEMFKRIGEQFTAMFRRKAFLHWYTGEGMDEMEFTEAESNMNDLVSEYQQYQDATAEEEGEYDEDEDDEGGDYA.

The GTP site is built by Glu-44, Ser-113, Gly-117, Thr-118, Gly-119, Asn-179, and Asn-201. Residue Glu-44 coordinates Mg(2+). Positions 394 to 423 are disordered; sequence VSEYQQYQDATAEEEGEYDEDEDDEGGDYA. The span at 404-423 shows a compositional bias: acidic residues; it reads TAEEEGEYDEDEDDEGGDYA.

It belongs to the tubulin family. In terms of assembly, dimer of alpha and beta chains. A typical microtubule is a hollow water-filled tube with an outer diameter of 25 nm and an inner diameter of 15 nM. Alpha-beta heterodimers associate head-to-tail to form protofilaments running lengthwise along the microtubule wall with the beta-tubulin subunit facing the microtubule plus end conferring a structural polarity. Microtubules usually have 13 protofilaments but different protofilament numbers can be found in some organisms and specialized cells. Mg(2+) is required as a cofactor.

It localises to the cytoplasm. Its subcellular location is the cytoskeleton. In terms of biological role, tubulin is the major constituent of microtubules, a cylinder consisting of laterally associated linear protofilaments composed of alpha- and beta-tubulin heterodimers. Microtubules grow by the addition of GTP-tubulin dimers to the microtubule end, where a stabilizing cap forms. Below the cap, tubulin dimers are in GDP-bound state, owing to GTPase activity of alpha-tubulin. In Oomycete-like sp. (strain MacKay2000), this protein is Tubulin beta-2 chain (TUBB2).